The chain runs to 404 residues: Formate-dependent phosphoribosylglycinamide formyltransferase (404 aa).

N(1)-(5-phospho-beta-D-ribosyl)glycinamide contacts are provided by residues 25 to 26 (EL) and Glu-85. Residues Arg-118, Lys-159, 164-169 (SSGKGQ), 199-202 (EGFV), and Glu-207 each bind ATP. Residues 123 to 318 (RLAAEELGLP…EFELHARAIL (196 aa)) enclose the ATP-grasp domain. Mg(2+) contacts are provided by Glu-277 and Glu-289. Residues Asp-296, Lys-365, and 372–373 (RR) each bind N(1)-(5-phospho-beta-D-ribosyl)glycinamide.

The protein belongs to the PurK/PurT family. In terms of assembly, homodimer.

It carries out the reaction N(1)-(5-phospho-beta-D-ribosyl)glycinamide + formate + ATP = N(2)-formyl-N(1)-(5-phospho-beta-D-ribosyl)glycinamide + ADP + phosphate + H(+). The protein operates within purine metabolism; IMP biosynthesis via de novo pathway; N(2)-formyl-N(1)-(5-phospho-D-ribosyl)glycinamide from N(1)-(5-phospho-D-ribosyl)glycinamide (formate route): step 1/1. Functionally, involved in the de novo purine biosynthesis. Catalyzes the transfer of formate to 5-phospho-ribosyl-glycinamide (GAR), producing 5-phospho-ribosyl-N-formylglycinamide (FGAR). Formate is provided by PurU via hydrolysis of 10-formyl-tetrahydrofolate. The chain is Formate-dependent phosphoribosylglycinamide formyltransferase from Burkholderia thailandensis (strain ATCC 700388 / DSM 13276 / CCUG 48851 / CIP 106301 / E264).